The sequence spans 26 residues: Dermaseptin-J1 (26 aa).

Valine amide is present on Val26.

In terms of tissue distribution, expressed by the skin glands.

It is found in the secreted. In terms of biological role, has antimicrobial activity. The sequence is that of Dermaseptin-J1 from Phasmahyla jandaia (Jandaia leaf frog).